The sequence spans 139 residues: Ribosomal RNA large subunit methyltransferase H (139 aa).

S-adenosyl-L-methionine-binding positions include L57, G88, and 107–112 (LSAMTF).

This sequence belongs to the RNA methyltransferase RlmH family. As to quaternary structure, homodimer.

The protein resides in the cytoplasm. The catalysed reaction is pseudouridine(1915) in 23S rRNA + S-adenosyl-L-methionine = N(3)-methylpseudouridine(1915) in 23S rRNA + S-adenosyl-L-homocysteine + H(+). Its function is as follows. Specifically methylates the pseudouridine at position 1915 (m3Psi1915) in 23S rRNA. In Solibacter usitatus (strain Ellin6076), this protein is Ribosomal RNA large subunit methyltransferase H.